A 156-amino-acid chain; its full sequence is S-ribosylhomocysteine lyase (156 aa).

Positions 56, 60, and 123 each coordinate Fe cation.

It belongs to the LuxS family. In terms of assembly, homodimer. Fe cation is required as a cofactor.

It carries out the reaction S-(5-deoxy-D-ribos-5-yl)-L-homocysteine = (S)-4,5-dihydroxypentane-2,3-dione + L-homocysteine. Functionally, involved in the synthesis of autoinducer 2 (AI-2) which is secreted by bacteria and is used to communicate both the cell density and the metabolic potential of the environment. The regulation of gene expression in response to changes in cell density is called quorum sensing. Catalyzes the transformation of S-ribosylhomocysteine (RHC) to homocysteine (HC) and 4,5-dihydroxy-2,3-pentadione (DPD). This chain is S-ribosylhomocysteine lyase, found in Staphylococcus saprophyticus subsp. saprophyticus (strain ATCC 15305 / DSM 20229 / NCIMB 8711 / NCTC 7292 / S-41).